Reading from the N-terminus, the 243-residue chain is Triosephosphate isomerase (243 aa).

A substrate-binding site is contributed by 9 to 11 (NWK). His96 serves as the catalytic Electrophile. Glu165 serves as the catalytic Proton acceptor. Substrate-binding positions include Gly171, Ser204, and 225-226 (GG).

It belongs to the triosephosphate isomerase family. As to quaternary structure, homodimer.

It is found in the cytoplasm. It carries out the reaction D-glyceraldehyde 3-phosphate = dihydroxyacetone phosphate. The protein operates within carbohydrate biosynthesis; gluconeogenesis. It participates in carbohydrate degradation; glycolysis; D-glyceraldehyde 3-phosphate from glycerone phosphate: step 1/1. Involved in the gluconeogenesis. Catalyzes stereospecifically the conversion of dihydroxyacetone phosphate (DHAP) to D-glyceraldehyde-3-phosphate (G3P). The chain is Triosephosphate isomerase from Synechococcus sp. (strain CC9311).